A 66-amino-acid polypeptide reads, in one-letter code: Large ribosomal subunit protein uL29 (66 aa).

Belongs to the universal ribosomal protein uL29 family.

The protein is Large ribosomal subunit protein uL29 of Borrelia hermsii (strain HS1 / DAH).